Here is a 675-residue protein sequence, read N- to C-terminus: Rho GTPase-activating protein 40 (675 aa).

Disordered stretches follow at residues 95-118 and 187-218; these read RDELREEDSGGNEGQLPEEGEAES and KMSSENGDSGMKGAQLSSGASKFPPAAEPGGL. Acidic residues predominate over residues 103 to 116; it reads SGGNEGQLPEEGEA. The region spanning 323–522 is the Rho-GAP domain; that stretch reads VPLDSLLEAD…IMVHYQDLLW (200 aa).

Its function is as follows. GTPase activator for the Rho-type GTPases by converting them to an inactive GDP-bound state. This is Rho GTPase-activating protein 40 from Homo sapiens (Human).